Here is a 148-residue protein sequence, read N- to C-terminus: Tetratricopeptide repeat protein 32 (148 aa).

3 TPR repeats span residues 12–45 (SSAA…CARH), 55–88 (ATAY…LPSF), and 89–122 (EVPY…NPGF).

The sequence is that of Tetratricopeptide repeat protein 32 (Ttc32) from Mus musculus (Mouse).